The primary structure comprises 690 residues: Elongation factor G (690 aa).

Positions 8-282 constitute a tr-type G domain; sequence ERVRNIGIAA…AVIDYLPAPV (275 aa). GTP-binding positions include 17 to 24, 81 to 85, and 135 to 138; these read AHIDAGKT, DTPGH, and NKMD.

Belongs to the TRAFAC class translation factor GTPase superfamily. Classic translation factor GTPase family. EF-G/EF-2 subfamily.

The protein localises to the cytoplasm. In terms of biological role, catalyzes the GTP-dependent ribosomal translocation step during translation elongation. During this step, the ribosome changes from the pre-translocational (PRE) to the post-translocational (POST) state as the newly formed A-site-bound peptidyl-tRNA and P-site-bound deacylated tRNA move to the P and E sites, respectively. Catalyzes the coordinated movement of the two tRNA molecules, the mRNA and conformational changes in the ribosome. In Parasynechococcus marenigrum (strain WH8102), this protein is Elongation factor G.